The chain runs to 184 residues: Leucine-rich repeat-containing protein 20 (184 aa).

LRR repeat units lie at residues 51–72, 75–96, 98–120, 121–141, and 145–167; these read QIHL…FMTT, QLRE…VSAL, HLKA…TALP, ALET…EKLA, and ALRS…APPL. At Ser175 the chain carries Phosphoserine.

The chain is Leucine-rich repeat-containing protein 20 (LRRC20) from Homo sapiens (Human).